A 261-amino-acid chain; its full sequence is Protein unc-50 homolog (261 aa).

The next 6 membrane-spanning stretches (helical) occupy residues 37 to 57, 82 to 102, 113 to 133, 166 to 186, 190 to 210, and 225 to 245; these read IFHYPQMDIEYTFWIMFYLCF, AFAVILVFFMAIASMSYAITF, VMFWAVFVDFITVGLLIATIG, SFFPLFIILYVVQFFLLPILL, LFAAILSNTLYIIGFSYYYYV, and VVFLYPIGILFALYIVSVVMG.

It belongs to the unc-50 family.

Its subcellular location is the membrane. This is Protein unc-50 homolog from Dictyostelium discoideum (Social amoeba).